The following is a 522-amino-acid chain: Secreted RxLR effector protein 105 (522 aa).

Positions 1 to 21 (MRGPCSVITALLVVASSQIAA) are cleaved as a signal peptide. The short motif at 48-63 (RYLRGSQHVLDSNEER) is the RxLR-dEER element.

It belongs to the RxLR effector family.

It localises to the secreted. Its subcellular location is the host nucleus. The protein localises to the host cytoplasm. Its function is as follows. Secreted effector that dos not suppress the host cell death induced by cell death-inducing proteins. This chain is Secreted RxLR effector protein 105, found in Plasmopara viticola (Downy mildew of grapevine).